Consider the following 276-residue polypeptide: Rhomboid protease GlpG (276 aa).

Helical transmembrane passes span 94-114 (GPFTWAILLICIAVFILQNLL), 142-162 (AFMHFSLMHILFNLLWWWYLG), 169-189 (IGSGKLVVITVISALLSGFVQ), 192-212 (FSGPWFGGLSGVVYALMGYVW), 229-249 (LILFSLVWLIAGWFDVFGMAI), and 252-272 (GAHVAGLATGLAMAFVDTLHG). Serine 201 (nucleophile) is an active-site residue. The active site involves histidine 254.

It belongs to the peptidase S54 family.

Its subcellular location is the cell inner membrane. The enzyme catalyses Cleaves type-1 transmembrane domains using a catalytic dyad composed of serine and histidine that are contributed by different transmembrane domains.. Its function is as follows. Rhomboid-type serine protease that catalyzes intramembrane proteolysis. The chain is Rhomboid protease GlpG from Klebsiella pneumoniae subsp. pneumoniae (strain ATCC 700721 / MGH 78578).